The sequence spans 534 residues: (R)-citramalate synthase (534 aa).

Residues 11 to 274 (FHVFDTTLRD…KQVLPEGRLR (264 aa)) form the Pyruvate carboxyltransferase domain.

Belongs to the alpha-IPM synthase/homocitrate synthase family.

The catalysed reaction is pyruvate + acetyl-CoA + H2O = (3R)-citramalate + CoA + H(+). The protein operates within amino-acid biosynthesis; L-isoleucine biosynthesis; 2-oxobutanoate from pyruvate: step 1/3. Its function is as follows. Catalyzes the condensation of pyruvate and acetyl-coenzyme A to form (R)-citramalate. In Streptomyces coelicolor (strain ATCC BAA-471 / A3(2) / M145), this protein is (R)-citramalate synthase.